The chain runs to 194 residues: Coiled-coil domain-containing protein 184 (194 aa).

Residues 39–68 (GMKELMEHLKAQLQALFEDVRAMRGALDEQ) adopt a coiled-coil conformation. Residues 101 to 176 (GLGVVGGKGS…LLGGDGPLVE (76 aa)) are disordered. A compositionally biased stretch (acidic residues) spans 135-145 (PEDEEEEEEEK).

In Homo sapiens (Human), this protein is Coiled-coil domain-containing protein 184 (CCDC184).